A 251-amino-acid polypeptide reads, in one-letter code: 3-deoxy-manno-octulosonate cytidylyltransferase (251 aa).

It belongs to the KdsB family.

It is found in the cytoplasm. It carries out the reaction 3-deoxy-alpha-D-manno-oct-2-ulosonate + CTP = CMP-3-deoxy-beta-D-manno-octulosonate + diphosphate. Its pathway is nucleotide-sugar biosynthesis; CMP-3-deoxy-D-manno-octulosonate biosynthesis; CMP-3-deoxy-D-manno-octulosonate from 3-deoxy-D-manno-octulosonate and CTP: step 1/1. It participates in bacterial outer membrane biogenesis; lipopolysaccharide biosynthesis. Functionally, activates KDO (a required 8-carbon sugar) for incorporation into bacterial lipopolysaccharide in Gram-negative bacteria. The sequence is that of 3-deoxy-manno-octulosonate cytidylyltransferase from Vibrio vulnificus (strain YJ016).